A 104-amino-acid polypeptide reads, in one-letter code: ATP-dependent Clp protease adapter protein ClpS (104 aa).

The protein belongs to the ClpS family. Binds to the N-terminal domain of the chaperone ClpA.

Its function is as follows. Involved in the modulation of the specificity of the ClpAP-mediated ATP-dependent protein degradation. This is ATP-dependent Clp protease adapter protein ClpS from Burkholderia thailandensis (strain ATCC 700388 / DSM 13276 / CCUG 48851 / CIP 106301 / E264).